Here is a 357-residue protein sequence, read N- to C-terminus: MLTKRRMKFQYISCLAWLAHYDIFHLVPRDKNISYADLARAAGVPEQRLKSILRMAMTSSLFREHPNGTDVGHSAVSALLASDDDAYSYATYMCSKTAPMAMSMTEAHKRWGASTRTNETAYNVAFNTDLPFFDYLAQNKARMDEFARYMRSVRSSETVALKHLISGVDWESIPAGGMLVDVGGSTGGAAIALAQAYPHIRFTVQDLPENVETGEKAAAASLPADIASRLTFQAHDFTLPQPVRAADAYLLRMILHDWPDEQAVKILRNIVTAMDETKSRLFIMDTVLPKPGSVPISVERIARARDLTMIQSFNSKERELDEWKDLITAADPRLQLIGVTQPFGSAMSILEIQLSAK.

Residue D206 coordinates S-adenosyl-L-methionine. Catalysis depends on H256, which acts as the Proton acceptor.

Belongs to the class I-like SAM-binding methyltransferase superfamily. Cation-independent O-methyltransferase family.

Its pathway is pigment biosynthesis. It participates in secondary metabolite biosynthesis. Its function is as follows. O-methyltransferase; part of the gene cluster that mediates the biosynthesis of pleosporalin A, ascomycone A, as well as a third cryptic naphthoquinone derived pigment, all responsible for the coloration of conidia. Specifically methylates position C-6 of the pgmA product 3-acetonyl-1,6,8-trihydroxy-2-naphthaldehyde to yield fusarubinaldehyde. The pathway begins with the biosynthesis of the cyclized heptaketide 3-acetonyl-1,6,8-trihydroxy-2-naphthaldehyde by the NR-PKS pgmA. The C-6 hydroxyl group is further methylated by the O-methyltransferase pgmB to yield fusarubinaldehyde which is in turn oxidized by the cytochrome P450 monooxygenase pgmC at C-9. The C-1 hydroxyl group is then methylated spontaneously. Although pgmE, pgmD and pgmH are essential for the production of pleosporalin A, it is not the case for the 2 other final products and it remains difficult to assign a specific function to each enzyme. PgmF and pgmG seem not to be involved in pigment biosynthesis although they were regulated by the cluster-specific transcription factor pgmR. This is O-methyltransferase pgmB from Aspergillus terreus (strain NIH 2624 / FGSC A1156).